A 49-amino-acid chain; its full sequence is uncharacterized protein (49 aa).

This is an uncharacterized protein from Escherichia coli (Bacteriophage T4).